A 111-amino-acid polypeptide reads, in one-letter code: uncharacterized protein (111 aa).

A helical membrane pass occupies residues 81 to 101 (YFFLLFYVSFPHIFLGLFFFI).

It localises to the membrane. This is an uncharacterized protein from Schizosaccharomyces pombe (strain 972 / ATCC 24843) (Fission yeast).